A 110-amino-acid polypeptide reads, in one-letter code: Small ribosomal subunit protein bS16 (110 aa).

The segment at 87-110 (ARQNPIKAVPRKERKAQAEAAAKG) is disordered.

Belongs to the bacterial ribosomal protein bS16 family.

This chain is Small ribosomal subunit protein bS16, found in Bradyrhizobium sp. (strain BTAi1 / ATCC BAA-1182).